A 461-amino-acid polypeptide reads, in one-letter code: Cysteine--tRNA ligase (461 aa).

Cysteine 30 serves as a coordination point for Zn(2+). A 'HIGH' region motif is present at residues 32-42; that stretch reads PTVYSYAHIGN. 3 residues coordinate Zn(2+): cysteine 212, histidine 237, and glutamate 241. The short motif at 270 to 274 is the 'KMSKS' region element; the sequence is KMSKS. Residue lysine 273 participates in ATP binding.

It belongs to the class-I aminoacyl-tRNA synthetase family. In terms of assembly, monomer. Zn(2+) serves as cofactor.

It is found in the cytoplasm. It catalyses the reaction tRNA(Cys) + L-cysteine + ATP = L-cysteinyl-tRNA(Cys) + AMP + diphosphate. This is Cysteine--tRNA ligase from Maricaulis maris (strain MCS10) (Caulobacter maris).